We begin with the raw amino-acid sequence, 233 residues long: Small ribosomal subunit protein uS2c (233 aa).

Belongs to the universal ribosomal protein uS2 family.

It localises to the plastid. It is found in the apicoplast. The chain is Small ribosomal subunit protein uS2c from Toxoplasma gondii.